Reading from the N-terminus, the 190-residue chain is Biphenyl-2,3-diol 1,2-dioxygenase 3 (190 aa).

The VOC domain occupies 6-125 (RLAHFVLQTN…DGNMVELQID (120 aa)). Fe cation is bound by residues H9, H73, and E121.

The protein belongs to the extradiol ring-cleavage dioxygenase family. Homohexamer. Fe(2+) is required as a cofactor.

It carries out the reaction biphenyl-2,3-diol + O2 = 2-hydroxy-6-oxo-6-phenylhexa-2,4-dienoate + H(+). Its pathway is xenobiotic degradation; biphenyl degradation; 2-hydroxy-2,4-pentadienoate and benzoate from biphenyl: step 3/4. This Rhodococcus globerulus protein is Biphenyl-2,3-diol 1,2-dioxygenase 3 (bphC3).